The chain runs to 438 residues: Mitochondrial distribution and morphology protein 12 (438 aa).

Residues 1–438 (MSIEVDWAAA…VYPSFWTFLV (438 aa)) enclose the SMP-LTD domain. 3 disordered regions span residues 110-154 (SFSH…TSTL), 185-277 (SDSG…MRER), and 353-379 (GSEQSQGSQNPSDDGRPRSGGDQKDKE). Positions 212-226 (DTTNSTSRPSTANTL) are enriched in polar residues. Positions 227–245 (PSHPSLGHSGSSGSNPHTS) are enriched in low complexity. The span at 354–364 (SEQSQGSQNPS) shows a compositional bias: polar residues. The segment covering 365–379 (DDGRPRSGGDQKDKE) has biased composition (basic and acidic residues).

Belongs to the MDM12 family. Component of the ER-mitochondria encounter structure (ERMES) or MDM complex, composed of mmm1, mdm10, mdm12 and mdm34. A mmm1 homodimer associates with one molecule of mdm12 on each side in a pairwise head-to-tail manner, and the SMP-LTD domains of mmm1 and mdm12 generate a continuous hydrophobic tunnel for phospholipid trafficking.

The protein resides in the mitochondrion outer membrane. It localises to the endoplasmic reticulum membrane. Its function is as follows. Component of the ERMES/MDM complex, which serves as a molecular tether to connect the endoplasmic reticulum (ER) and mitochondria. Components of this complex are involved in the control of mitochondrial shape and protein biogenesis, and function in nonvesicular lipid trafficking between the ER and mitochondria. Mdm12 is required for the interaction of the ER-resident membrane protein mmm1 and the outer mitochondrial membrane-resident beta-barrel protein mdm10. The mdm12-mmm1 subcomplex functions in the major beta-barrel assembly pathway that is responsible for biogenesis of all mitochondrial outer membrane beta-barrel proteins, and acts in a late step after the SAM complex. The mdm10-mdm12-mmm1 subcomplex further acts in the TOM40-specific pathway after the action of the mdm12-mmm1 complex. Essential for establishing and maintaining the structure of mitochondria and maintenance of mtDNA nucleoids. The sequence is that of Mitochondrial distribution and morphology protein 12 from Penicillium rubens (strain ATCC 28089 / DSM 1075 / NRRL 1951 / Wisconsin 54-1255) (Penicillium chrysogenum).